A 547-amino-acid polypeptide reads, in one-letter code: Chaperonin GroEL (547 aa).

ATP-binding positions include 30–33, lysine 51, 87–91, glycine 415, and aspartate 496; these read TLGP and DGTTT.

It belongs to the chaperonin (HSP60) family. Forms a cylinder of 14 subunits composed of two heptameric rings stacked back-to-back. Interacts with the co-chaperonin GroES.

It localises to the cytoplasm. It catalyses the reaction ATP + H2O + a folded polypeptide = ADP + phosphate + an unfolded polypeptide.. Its function is as follows. Together with its co-chaperonin GroES, plays an essential role in assisting protein folding. The GroEL-GroES system forms a nano-cage that allows encapsulation of the non-native substrate proteins and provides a physical environment optimized to promote and accelerate protein folding. This is Chaperonin GroEL from Histophilus somni (strain 129Pt) (Haemophilus somnus).